Reading from the N-terminus, the 510-residue chain is NAD(P)H-quinone oxidoreductase subunit 2 B, chloroplastic (510 aa).

Helical transmembrane passes span 24 to 44 (LLLFDGSLIVPECILIFGLIL), 57 to 77 (IPWLYFISSTSLVMSITALLF), 99 to 119 (IFQFLILLCSTLCIPLSVEYI), 124 to 144 (MAITEFLLFVLTATLGGMFLC), 149 to 169 (LITIFVAPECFSLCSYLLSGY), 183 to 203 (YLLMGGASSSILVHGFSWLYG), 227 to 247 (PGISIALIFITVGIGFKLSPA), 295 to 315 (WHLLLETLAILSMILGNLIAI), 323 to 343 (MLAYSSIGQIGYVIIGIIVGD), 354 to 374 (YMLFYISMNLGTFACIVLFGL), 395 to 415 (ALSLALCLLSLGGLPPLAGFF), 418 to 438 (LYLFWCGWQAGLYFLVLIGLL), and 484 to 504 (MIVCVIASTIPGISMNPIIAI).

Belongs to the complex I subunit 2 family. In terms of assembly, NDH is composed of at least 16 different subunits, 5 of which are encoded in the nucleus.

It is found in the plastid. Its subcellular location is the chloroplast thylakoid membrane. The enzyme catalyses a plastoquinone + NADH + (n+1) H(+)(in) = a plastoquinol + NAD(+) + n H(+)(out). It carries out the reaction a plastoquinone + NADPH + (n+1) H(+)(in) = a plastoquinol + NADP(+) + n H(+)(out). NDH shuttles electrons from NAD(P)H:plastoquinone, via FMN and iron-sulfur (Fe-S) centers, to quinones in the photosynthetic chain and possibly in a chloroplast respiratory chain. The immediate electron acceptor for the enzyme in this species is believed to be plastoquinone. Couples the redox reaction to proton translocation, and thus conserves the redox energy in a proton gradient. The polypeptide is NAD(P)H-quinone oxidoreductase subunit 2 B, chloroplastic (Daucus carota (Wild carrot)).